Consider the following 156-residue polypeptide: Type IV major fimbrial protein FimA (156 aa).

A propeptide spans 1 to 7 (leader sequence); that stretch reads MKSLQKG. An N-methylphenylalanine modification is found at Phe-8. The helical transmembrane segment at 8-28 threads the bilayer; that stretch reads FTLIELMIVVAIIGILAAIAI. Disulfide bonds link Cys-57-Cys-67 and Cys-141-Cys-154.

It belongs to the N-Me-Phe pilin family. The pili are polar flexible filaments of about 5.4 nanometers diameter and 2.5 micrometers average length; they consist of only a single polypeptide chain arranged in a helical configuration of five subunits per turn in the assembled pilus.

It localises to the fimbrium. The protein resides in the membrane. In terms of biological role, major component of the type IV fimbriae that plays an essential role in twitching motility, natural transformation, and protease secretion. This is Type IV major fimbrial protein FimA (fimA) from Dichelobacter nodosus (Bacteroides nodosus).